Reading from the N-terminus, the 359-residue chain is Aminomethyltransferase (359 aa).

The protein belongs to the GcvT family. As to quaternary structure, the glycine cleavage system is composed of four proteins: P, T, L and H.

It catalyses the reaction N(6)-[(R)-S(8)-aminomethyldihydrolipoyl]-L-lysyl-[protein] + (6S)-5,6,7,8-tetrahydrofolate = N(6)-[(R)-dihydrolipoyl]-L-lysyl-[protein] + (6R)-5,10-methylene-5,6,7,8-tetrahydrofolate + NH4(+). In terms of biological role, the glycine cleavage system catalyzes the degradation of glycine. The chain is Aminomethyltransferase from Idiomarina loihiensis (strain ATCC BAA-735 / DSM 15497 / L2-TR).